Consider the following 690-residue polypeptide: Methionine--tRNA ligase (690 aa).

A 'HIGH' region motif is present at residues 20–30 (PYANGSIHLGH). Zn(2+) is bound by residues Cys-151, Cys-154, Cys-164, and Cys-167. A 'KMSKS' region motif is present at residues 337-341 (KMSKS). Residue Lys-340 participates in ATP binding. The tRNA-binding domain maps to 589-690 (DFAKVDLRIA…EGAQPGMRVM (102 aa)).

This sequence belongs to the class-I aminoacyl-tRNA synthetase family. MetG type 1 subfamily. In terms of assembly, homodimer. It depends on Zn(2+) as a cofactor.

The protein localises to the cytoplasm. The catalysed reaction is tRNA(Met) + L-methionine + ATP = L-methionyl-tRNA(Met) + AMP + diphosphate. Is required not only for elongation of protein synthesis but also for the initiation of all mRNA translation through initiator tRNA(fMet) aminoacylation. The sequence is that of Methionine--tRNA ligase from Vibrio vulnificus (strain CMCP6).